Consider the following 174-residue polypeptide: Shikimate kinase (174 aa).

Position 15–20 (15–20 (GTGKST)) interacts with ATP. Ser-19 serves as a coordination point for Mg(2+). Positions 37, 61, and 82 each coordinate substrate. Arg-120 provides a ligand contact to ATP. Arg-138 lines the substrate pocket.

The protein belongs to the shikimate kinase family. Monomer. Mg(2+) serves as cofactor.

The protein localises to the cytoplasm. The catalysed reaction is shikimate + ATP = 3-phosphoshikimate + ADP + H(+). It functions in the pathway metabolic intermediate biosynthesis; chorismate biosynthesis; chorismate from D-erythrose 4-phosphate and phosphoenolpyruvate: step 5/7. Its function is as follows. Catalyzes the specific phosphorylation of the 3-hydroxyl group of shikimic acid using ATP as a cosubstrate. This chain is Shikimate kinase, found in Staphylococcus aureus (strain Mu3 / ATCC 700698).